Here is a 277-residue protein sequence, read N- to C-terminus: Small ribosomal subunit protein uS2 (277 aa).

A disordered region spans residues Gly-226–Ala-277. The segment covering Ala-239–Val-257 has biased composition (low complexity).

The protein belongs to the universal ribosomal protein uS2 family.

This is Small ribosomal subunit protein uS2 from Sphingopyxis alaskensis (strain DSM 13593 / LMG 18877 / RB2256) (Sphingomonas alaskensis).